A 793-amino-acid chain; its full sequence is Kinesin-like protein KIN-14C (793 aa).

The segment at 1–43 (MASRNQNRPPRSPNAKKEGLGGISFDKRRKVETQGGTGRRQAF) is disordered. The globular stretch occupies residues 1-69 (MASRNQNRPP…IEECGKVDFT (69 aa)). The span at 15 to 32 (AKKEGLGGISFDKRRKVE) shows a compositional bias: basic and acidic residues. The stretch at 120–375 (KENLKVSLES…EQQLAIANER (256 aa)) forms a coiled coil. Residues 431 to 772 (NIRVFCRVRP…LRFAARVNAC (342 aa)) form the Kinesin motor domain. 516–523 (GQTGSGKT) lines the ATP pocket.

Belongs to the TRAFAC class myosin-kinesin ATPase superfamily. Kinesin family. KIN-14 subfamily.

It is found in the cytoplasm. Its subcellular location is the cytoskeleton. The protein resides in the spindle. It localises to the phragmoplast. The protein localises to the chromosome. It is found in the centromere. Its subcellular location is the kinetochore. In terms of biological role, kinesin that supports microtubule movement in an ATP-dependent manner and has a minus-end directed polarity. Plays a crucial role in spindle morphogenesis in male meiosis. In mitosis, is required for normal microtubule accumulation at the spindle poles during prophase and may play a role in spindle assembly during prometaphase. This Arabidopsis thaliana (Mouse-ear cress) protein is Kinesin-like protein KIN-14C.